Consider the following 174-residue polypeptide: Vimentin-type intermediate filament-associated coiled-coil protein (174 aa).

The stretch at 7-97 forms a coiled coil; that stretch reads LQIREANAHL…DQRDQMIQQL (91 aa). Residues 128-174 are disordered; sequence GPLPASHSHRAQLLPDGPGPPLGNNMGKEEGQDDQDDQQPAVFGTTV.

The protein localises to the cytoplasm. The polypeptide is Vimentin-type intermediate filament-associated coiled-coil protein (Vmac) (Mus musculus (Mouse)).